Here is a 220-residue protein sequence, read N- to C-terminus: Uracil-DNA glycosylase (220 aa).

The Proton acceptor role is filled by D60.

The protein belongs to the uracil-DNA glycosylase (UDG) superfamily. UNG family.

Its subcellular location is the cytoplasm. The enzyme catalyses Hydrolyzes single-stranded DNA or mismatched double-stranded DNA and polynucleotides, releasing free uracil.. Functionally, excises uracil residues from the DNA which can arise as a result of misincorporation of dUMP residues by DNA polymerase or due to deamination of cytosine. The chain is Uracil-DNA glycosylase from Francisella tularensis subsp. tularensis (strain FSC 198).